Here is a 400-residue protein sequence, read N- to C-terminus: MPAFKTIDDLNDIAGKRVLVRVDLNVPVADGKVTDATRIERVAPTILELSSKGAKVILLAHFGRPKGEPVAEMSLSQIVPTVEDVLDHAISFATDCIGAPAADAVAKMNDGDILLLENTRFHKGEEKNDPAFVEELAANGDIYVNDAFSAAHRAHASTEGLARHLPAYAGRTMQAELEALEKGLGQPVRPVVAIVGGAKVSSKIDLLMNLVKKVDALVIGGGMANTFLAARGTNVGKSLCEHDLAETAKQIMIEAATSGCAIVLPEDGVVAREFTAGAANEIVDINAIPADAMVLDVGPKSVESIKAWISRAETLVWNGPLGAFEIEPFDAATVAAAKHAAECTKAGKLVSVAGGGDTVAALNHAGVSDDFTYISTAGGAFLEWMEGKELPGVAILTTAK.

Substrate is bound by residues 23–25, Arg38, 61–64, Arg120, and Arg153; these read DLN and HFGR. ATP-binding positions include Lys203, Glu325, and 355 to 358; that span reads GGDT.

It belongs to the phosphoglycerate kinase family. In terms of assembly, monomer.

It is found in the cytoplasm. The catalysed reaction is (2R)-3-phosphoglycerate + ATP = (2R)-3-phospho-glyceroyl phosphate + ADP. It participates in carbohydrate degradation; glycolysis; pyruvate from D-glyceraldehyde 3-phosphate: step 2/5. The sequence is that of Phosphoglycerate kinase from Agrobacterium fabrum (strain C58 / ATCC 33970) (Agrobacterium tumefaciens (strain C58)).